Here is a 336-residue protein sequence, read N- to C-terminus: Dihydroorotate dehydrogenase (quinone) (336 aa).

FMN is bound by residues 62–66 (AGLDK) and threonine 86. Residue lysine 66 participates in substrate binding. A substrate-binding site is contributed by 111–115 (NRMGF). 2 residues coordinate FMN: asparagine 139 and asparagine 172. Position 172 (asparagine 172) interacts with substrate. The active-site Nucleophile is serine 175. Asparagine 177 is a substrate binding site. Lysine 217 and threonine 245 together coordinate FMN. Position 246-247 (246-247 (NT)) interacts with substrate. FMN contacts are provided by residues glycine 268, glycine 297, and 318-319 (YS).

This sequence belongs to the dihydroorotate dehydrogenase family. Type 2 subfamily. In terms of assembly, monomer. It depends on FMN as a cofactor.

It is found in the cell membrane. It catalyses the reaction (S)-dihydroorotate + a quinone = orotate + a quinol. It participates in pyrimidine metabolism; UMP biosynthesis via de novo pathway; orotate from (S)-dihydroorotate (quinone route): step 1/1. Its function is as follows. Catalyzes the conversion of dihydroorotate to orotate with quinone as electron acceptor. The protein is Dihydroorotate dehydrogenase (quinone) of Salmonella typhi.